Here is a 316-residue protein sequence, read N- to C-terminus: Putative HTH-type transcriptional regulatory protein PYRAB03670 (316 aa).

Residues Leu-131–Leu-189 form the HTH cro/C1-type domain. A DNA-binding region (H-T-H motif) is located at residues Leu-142–Lys-161.

The polypeptide is Putative HTH-type transcriptional regulatory protein PYRAB03670 (Pyrococcus abyssi (strain GE5 / Orsay)).